The following is a 215-amino-acid chain: Leucyl/phenylalanyl-tRNA--protein transferase (215 aa).

Belongs to the L/F-transferase family.

The protein resides in the cytoplasm. The catalysed reaction is N-terminal L-lysyl-[protein] + L-leucyl-tRNA(Leu) = N-terminal L-leucyl-L-lysyl-[protein] + tRNA(Leu) + H(+). The enzyme catalyses N-terminal L-arginyl-[protein] + L-leucyl-tRNA(Leu) = N-terminal L-leucyl-L-arginyl-[protein] + tRNA(Leu) + H(+). It carries out the reaction L-phenylalanyl-tRNA(Phe) + an N-terminal L-alpha-aminoacyl-[protein] = an N-terminal L-phenylalanyl-L-alpha-aminoacyl-[protein] + tRNA(Phe). Functions in the N-end rule pathway of protein degradation where it conjugates Leu, Phe and, less efficiently, Met from aminoacyl-tRNAs to the N-termini of proteins containing an N-terminal arginine or lysine. The sequence is that of Leucyl/phenylalanyl-tRNA--protein transferase from Campylobacter jejuni subsp. jejuni serotype O:6 (strain 81116 / NCTC 11828).